A 319-amino-acid polypeptide reads, in one-letter code: HPr kinase/phosphorylase (319 aa).

Residues H137 and K158 contribute to the active site. 152 to 159 serves as a coordination point for ATP; sequence GDSGVGKS. Mg(2+) is bound at residue S159. The Proton acceptor; for phosphorylation activity. Proton donor; for dephosphorylation activity role is filled by D176. The important for the catalytic mechanism of both phosphorylation and dephosphorylation stretch occupies residues 201–210; sequence MEIRGLGIIN. Residue E202 participates in Mg(2+) binding. R243 is an active-site residue. Positions 264–269 are important for the catalytic mechanism of dephosphorylation; it reads PVRPGR.

It belongs to the HPrK/P family. In terms of assembly, homohexamer. Requires Mg(2+) as cofactor.

It carries out the reaction [HPr protein]-L-serine + ATP = [HPr protein]-O-phospho-L-serine + ADP + H(+). The enzyme catalyses [HPr protein]-O-phospho-L-serine + phosphate + H(+) = [HPr protein]-L-serine + diphosphate. Functionally, catalyzes the ATP- as well as the pyrophosphate-dependent phosphorylation of a specific serine residue in HPr, a phosphocarrier protein of the phosphoenolpyruvate-dependent sugar phosphotransferase system (PTS). HprK/P also catalyzes the pyrophosphate-producing, inorganic phosphate-dependent dephosphorylation (phosphorolysis) of seryl-phosphorylated HPr (P-Ser-HPr). This is HPr kinase/phosphorylase from Treponema pallidum subsp. pallidum (strain SS14).